A 424-amino-acid chain; its full sequence is CAAX prenyl protease 1 homolog (424 aa).

A run of 5 helical transmembrane segments spans residues 3-23 (IPFM…ETYL), 67-87 (EFVT…PWFW), 109-129 (LSFL…FSLY), 155-175 (GTFL…FIVQ), and 185-205 (LWAF…VLIA). Position 284 (H284) interacts with Zn(2+). E285 is a catalytic residue. Residue H288 participates in Zn(2+) binding. 2 consecutive transmembrane segments (helical) span residues 295 to 315 (TYSF…YTLV) and 332 to 352 (VLIG…LVSF). E362 provides a ligand contact to Zn(2+). D366 functions as the Proton donor in the catalytic mechanism.

The protein belongs to the peptidase M48A family. Requires Zn(2+) as cofactor. In terms of tissue distribution, expressed in leaves, stems and flowers.

It is found in the endoplasmic reticulum membrane. It catalyses the reaction Hydrolyzes the peptide bond -P2-(S-farnesyl or geranylgeranyl)C-P1'-P2'-P3'-COOH where P1' and P2' are amino acids with aliphatic side chains and P3' is any C-terminal residue.. Proteolytically removes the C-terminal three residues of farnesylated proteins. The substrate specificity is only partially overlapping with that of FACE2. The polypeptide is CAAX prenyl protease 1 homolog (FACE1) (Arabidopsis thaliana (Mouse-ear cress)).